The following is a 480-amino-acid chain: MNKLILSILSVLLIVSIASAGNGIDISSGTNPSSSDLACLAKQNSKIIVQTWSGGYGFNSNVPSIVQAAKSAGLSVDLYAFLCSQCSGITDPAEAIKTLVSKLNGVKYGTLWIDVEQCNGCWSSTLSSNAQYVQTAVQTASQLGVNVGVYSSEGEWPQTVGSLTSLSSFPLWYAHYDNNPSFSDQGYNFGGWSKAVMKQYQGTTTQCGVSVDLNWFPGSGSSTTSSSATSSSTTGRPLTSSSGAGTGGHSSSSGAGTGGHSSTTGGQTSGQTSGQTSGSSNQPLSSGSSQDSSNSGSSNQPLSSGSSQDSSNSGSSNQPLSSGSSQTSGQTSGSSNQPLSSGSSQDSGSNSGSQGTTGSQSGSSSSNPLTSGSQSGSSGSQSTSSGSQSGSSGATGTSSTASSTSATGSSSTGSSTGSSSGSNDSGSNDSGSSSGSNNSGSSSGSNNSGSSSGSASSSGSSGSSGSGNYTSGSGNGAFLF.

The signal sequence occupies residues 1 to 20; the sequence is MNKLILSILSVLLIVSIASA. Residues 21-231 enclose the Ch-type lysozyme domain; that stretch reads GNGIDISSGT…STTSSSATSS (211 aa). Catalysis depends on residues Asp-25, Asp-114, and Glu-116. The segment covering 219 to 472 has biased composition (low complexity); it reads SGSSTTSSSA…SSGSGNYTSG (254 aa). Residues 219 to 480 form a disordered region; the sequence is SGSSTTSSSA…SGSGNGAFLF (262 aa). N-linked (GlcNAc...) asparagine glycans are attached at residues Asn-423, Asn-428, Asn-437, Asn-446, and Asn-468.

Belongs to the glycosyl hydrolase 25 family.

It is found in the secreted. The enzyme catalyses Hydrolysis of (1-&gt;4)-beta-linkages between N-acetylmuramic acid and N-acetyl-D-glucosamine residues in a peptidoglycan and between N-acetyl-D-glucosamine residues in chitodextrins.. In Dictyostelium discoideum (Social amoeba), this protein is Probable GH family 25 lysozyme 3.